The chain runs to 102 residues: Small ribosomal subunit protein uS10 (102 aa).

This sequence belongs to the universal ribosomal protein uS10 family. As to quaternary structure, part of the 30S ribosomal subunit.

Involved in the binding of tRNA to the ribosomes. This is Small ribosomal subunit protein uS10 from Brucella abortus (strain S19).